Reading from the N-terminus, the 585-residue chain is Frizzled-5 (585 aa).

An N-terminal signal peptide occupies residues 1 to 26; it reads MARPDPSAPPSLLLLLLAQLVGRAAA. The Extracellular segment spans residues 27-238; sequence ASKAPVCQEI…PDERTFATFW (212 aa). Positions 28 to 150 constitute an FZ domain; the sequence is SKAPVCQEIT…GDAEVLCMDY (123 aa). 5 disulfide bridges follow: Cys-33-Cys-94, Cys-41-Cys-87, Cys-78-Cys-116, Cys-105-Cys-147, and Cys-109-Cys-133. N-linked (GlcNAc...) asparagine glycosylation is present at Asn-47. The N-linked (GlcNAc...) asparagine glycan is linked to Asn-151. The tract at residues 156 to 182 is disordered; the sequence is TTASPKSFPAKPTLPGPPGAPSSGGEC. A helical transmembrane segment spans residues 239–259; it reads IGLWSVLCFISTSTTVATFLI. Residues 260-270 lie on the Cytoplasmic side of the membrane; the sequence is DMERFRYPERP. The chain crosses the membrane as a helical span at residues 271-291; the sequence is IIFLSACYLCVSLGFLVRLVV. The Extracellular portion of the chain corresponds to 292-315; it reads GHASVACSREHSHIHYETTGPALC. The helical transmembrane segment at 316–336 threads the bilayer; that stretch reads TVVFLLVYFFGMASSIWWVIL. Residues 337–358 lie on the Cytoplasmic side of the membrane; sequence SLTWFLAAGMKWGNEAIAGYAQ. A helical transmembrane segment spans residues 359–379; the sequence is YFHLAAWLIPSVKSITALALS. The Extracellular portion of the chain corresponds to 380 to 402; it reads SVDGDPVAGICYVGNQNLNSLRG. Residues 403–423 traverse the membrane as a helical segment; it reads FVLGPLVLYLLVGTLFLLAGF. Residues 424 to 449 are Cytoplasmic-facing; that stretch reads VSLFRIRSVIKQGGTKTDKLEKLMIR. A helical membrane pass occupies residues 450-470; it reads IGIFTLLYTVPASIVVACYLY. The Extracellular segment spans residues 471 to 500; it reads EQHYRESWEAALTCACPGPDAGQPRAKPEY. The chain crosses the membrane as a helical span at residues 501–521; sequence WVLMLKYFMCLVVGITSGVWI. Over 522–585 the chain is Cytoplasmic; the sequence is WSGKTLESWR…YHKQVSLSHV (64 aa). A PDZ-binding motif is present at residues 582–584; that stretch reads LSH.

It belongs to the G-protein coupled receptor Fz/Smo family. In terms of assembly, binding of unsaturated fatty acid molecules (via FZ domain) promotes homodimerization (via FZ domain). Interacts with WNT2B. Interacts with WNT7A. Interacts with GOPC. Post-translationally, ubiquitinated by RNF43 and ZNRF3, leading to its degradation by the proteasome. As to expression, detected in hippocampus (at protein level). Expressed in eye, kidney, lung, chondrocytes, epithelial cells of the small intestine and gobelet cells of the colon.

The protein resides in the cell membrane. It localises to the golgi apparatus membrane. It is found in the synapse. Its subcellular location is the perikaryon. The protein localises to the cell projection. The protein resides in the dendrite. It localises to the axon. Its function is as follows. Receptor for Wnt proteins. Functions in the canonical Wnt/beta-catenin signaling pathway. In vitro activates WNT2, WNT10B, WNT5A, but not WNT2B or WNT4 signaling. In neurons, activation by WNT7A promotes formation of synapses. May be involved in transduction and intercellular transmission of polarity information during tissue morphogenesis and/or in differentiated tissues. Plays a role in yolk sac angiogenesis and in placental vascularization. Plays a role in ocular development. This is Frizzled-5 (Fzd5) from Mus musculus (Mouse).